The sequence spans 131 residues: Lymphocyte antigen 6E (131 aa).

Residues 1–20 (MKIFLPVLLAALLGVERASS) form the signal peptide. The region spanning 21 to 101 (LMCFSCLNQK…CCQSFLCNFS (81 aa)) is the UPAR/Ly6 domain. 5 cysteine pairs are disulfide-bonded: Cys-23–Cys-48, Cys-26–Cys-35, Cys-41–Cys-71, Cys-75–Cys-92, and Cys-93–Cys-98. An N-linked (GlcNAc...) asparagine glycan is attached at Asn-99. Ser-101 is lipidated: GPI-anchor amidated serine. Residues 102–131 (AADGGLRASVTLLGAGLLLSLLPALLRFGP) constitute a propeptide, removed in mature form.

Interacts with CHRNA4. In terms of tissue distribution, widely expressed, predominantly in liver, kidney, ovary, spleen and peripheral blood Leukocytes.

It is found in the cell membrane. Its function is as follows. GPI-anchored cell surface protein that regulates T-lymphocytes proliferation, differentiation, and activation. Regulates the T-cell receptor (TCR) signaling by interacting with component CD3Z/CD247 at the plasma membrane, leading to CD3Z/CD247 phosphorylation modulation. Restricts the entry of human coronaviruses, including SARS-CoV, MERS-CoV and SARS-CoV-2, by interfering with spike protein-mediated membrane fusion. Also plays an essential role in placenta formation by acting as the main receptor for syncytin-A (SynA). Therefore, participates in the normal fusion of syncytiotrophoblast layer I (SynT-I) and in the proper morphogenesis of both fetal and maternal vasculatures within the placenta. May also act as a modulator of nicotinic acetylcholine receptors (nAChRs) activity. (Microbial infection) Promotes entry, likely through an enhanced virus-cell fusion process, of various viruses including HIV-1, West Nile virus, dengue virus and Zika virus. In contrast, the paramyxovirus PIV5, which enters at the plasma membrane, does not require LY6E. Mechanistically, adopts a microtubule-like organization upon viral infection and enhances viral uncoating after endosomal escape. This is Lymphocyte antigen 6E from Homo sapiens (Human).